Here is an 883-residue protein sequence, read N- to C-terminus: Integrator complex subunit 6-B (883 aa).

A VWFA domain is found at 3–227; sequence ILLFLLDTSA…QCLESLVQKI (225 aa). The short motif at 626–633 is the Inhibitory loop element; the sequence is MMIDEADE.

It belongs to the Integrator subunit 6 family. In terms of assembly, component of the Integrator complex, composed of core subunits INTS1, INTS2, INTS3, INTS4, INTS5, INTS6, INTS7, INTS8, INTS9/RC74, INTS10, INTS11/CPSF3L, INTS12, INTS13, INTS14 and INTS15. The core complex associates with protein phosphatase 2A subunits PPP2CA and PPP2R1A, to form the Integrator-PP2A (INTAC) complex.

Its subcellular location is the nucleus. It localises to the chromosome. Functionally, component of the integrator complex, a multiprotein complex that terminates RNA polymerase II (Pol II) transcription in the promoter-proximal region of genes. The integrator complex provides a quality checkpoint during transcription elongation by driving premature transcription termination of transcripts that are unfavorably configured for transcriptional elongation: the complex terminates transcription by (1) catalyzing dephosphorylation of the C-terminal domain (CTD) of Pol II subunit POLR2A/RPB1 and SUPT5H/SPT5, (2) degrading the exiting nascent RNA transcript via endonuclease activity and (3) promoting the release of Pol II from bound DNA. The integrator complex is also involved in terminating the synthesis of non-coding Pol II transcripts, such as enhancer RNAs (eRNAs), small nuclear RNAs (snRNAs), telomerase RNAs and long non-coding RNAs (lncRNAs). Within the integrator complex, INTS6 acts as a molecular adapter that promotes assembly of protein phosphatase 2A (PP2A) subunits to the integrator core complex, promoting recruitment of PP2A to transcription pause-release checkpoint. This is Integrator complex subunit 6-B (ints6-b) from Xenopus laevis (African clawed frog).